Here is a 148-residue protein sequence, read N- to C-terminus: 2S seed storage protein 1 (148 aa).

A signal peptide spans 1–19 (MARFTIVLAVLFAAALVSA). The propeptide occupies 20 to 38 (SAHKTVVTTSVAEEGEEEN). The interval 24-94 (TVVTTSVAEE…ECCNELRDVK (71 aa)) is involved in IgE-binding. Cystine bridges form between Cys-42/Cys-97, Cys-54/Cys-86, Cys-87/Cys-133, and Cys-99/Cys-141. 3 immunodominant epitope; binds to IgE of 14 patients out of 15 tested regions span residues 46 to 55 (SRQCQMRHCM), 48 to 57 (QCQMRHCMQW), and 76 to 86 (NQGQFEHFREC). The propeptide occupies 69-76 (FLRSAEAN). A propeptide spanning residues 147-148 (FA) is cleaved from the precursor.

Belongs to the 2S seed storage albumins family. The mature protein consists of a small and a large chain linked by disulfide bonds. In terms of tissue distribution, expressed in seeds (at protein level).

Functionally, seed storage protein. The sequence is that of 2S seed storage protein 1 from Sesamum indicum (Oriental sesame).